Consider the following 337-residue polypeptide: BRI1 kinase inhibitor 1 (337 aa).

The segment covering 1–25 has biased composition (polar residues); sequence METNLQQVKNSSQTFSEKQNPKQEA. Disordered stretches follow at residues 1 to 38 and 51 to 72; these read METNLQQVKNSSQTFSEKQNPKQEASPSPISSTCSSPS and SSSSKHISPTLRSPSKTTSSYQ. Positions 26–38 are enriched in low complexity; that stretch reads SPSPISSTCSSPS. At Tyr-211 the chain carries Phosphotyrosine. A disordered region spans residues 270–310; it reads SAPASMRTSPTNSGHLRVSTAGLSSSSGSTSSSSSDSTMEE. Positions 288-310 are enriched in low complexity; sequence STAGLSSSSGSTSSSSSDSTMEE.

As to quaternary structure, interacts (via C-terminus) with BRI1 (via kinase domain). In terms of processing, phosphorylated on Tyr-211 in response to brassinosteroid perception, leading to its inactivation: once phosphorylated, displaced into the cytosol where it is inactive. In terms of tissue distribution, expressed in leaves, petioles, shoot apices, hypocotyls, roots and flowers.

The protein resides in the cell membrane. Its subcellular location is the cytoplasm. Negative regulator of brassinosteroid signaling. When associated to the membrane, limits the interaction of BRI1 with BAK1 by binding to the kinase-inactive form of BRI1. This Arabidopsis thaliana (Mouse-ear cress) protein is BRI1 kinase inhibitor 1 (BKI1).